The following is a 212-amino-acid chain: Ribosomal RNA small subunit methyltransferase G (212 aa).

Residues Gly73, 127-128 (IE), and Arg143 contribute to the S-adenosyl-L-methionine site.

This sequence belongs to the methyltransferase superfamily. RNA methyltransferase RsmG family.

It localises to the cytoplasm. It carries out the reaction guanosine(527) in 16S rRNA + S-adenosyl-L-methionine = N(7)-methylguanosine(527) in 16S rRNA + S-adenosyl-L-homocysteine. Its function is as follows. Specifically methylates the N7 position of guanine in position 527 of 16S rRNA. In Methylobacterium nodulans (strain LMG 21967 / CNCM I-2342 / ORS 2060), this protein is Ribosomal RNA small subunit methyltransferase G.